The primary structure comprises 1507 residues: MKKLVPIEIGEEKRPKDIKAIQFRLASPEKILSWSHGEVKKPETINYRTLKPERDGLFCAKIFGPIKDYECLCGKYKKMRYKGVVCEKCGVEVTTSKVRRSRMGHIELVTPVAHIWYVNSLPSRIGTLLGVKMKDLERVLYYEAYIVKNPGEAYYDFEKKNPVKKYDVLNEEQYQQLVQHFGDTGFDARMGGEVVKELLEEFDLVEAFEQLREEMKNTNSEAKRKTIVKRLKVIESFLNSGNRPEWMMLTVVPVLPPDLRPLVALDGGKFAVSDVNDLYRRVINRNQRLKRLLELDAPEIIVRNEKRMLQEAVDALIDNGRRGNAVKGANKRPLKSLSEIIKGKQGRFRQNLLGKRVDFSGRSVIVVGPNLRMDQCGLPKLMALELFKPHLLAKLEEKGYATTLKQAKKMIEDRENVVWECLQEIVDEYPVLLNRAPTLHKLSIQAFHPVLIDGKAIQLHPLVCSAFNADFDGDQMAVHVPLTEEAIAECKILMLSSMNILLPASGRAIAVPTQDMVLGIYYLSKEKEDAKGTHKLFADINEVMTALESDYLDLNAKIRTKIDNQVIYTTAGRLIIKSILPDFVPVNLWNKVLKKKDIANLVDYVFKEGGPKITAEFLDNLKELGFKYSTVTGISISAYDIKVPDSKKRLIEEAKRKVKEIQQQFQAGLLTEQERYNKIIDIWTDTSNEVAKEMMELMKNDKDGFNSVYMMADSGARGSSAQIRQLAGMRGLMAKPDGTIIETPIISNFKEGLNVLEYFISTHGARKGLADTALKTANAGYLTRKLVDVAQNVKITMDDCGTHEGVEITDISVGNELIEPLEDRIFGRVLAQDIMDPITNEILFSEGTLLDEEKTRKIIEAGIKSVTIRTPITCKAEKGVCAKCYGLNMAEGKLVKPGEAVGIIAAQSIGEPGTQLTLRTFHVGGTASRSAEERQVVATKEGFIRYYNLKTYETEDGKIIVANRRNAAVLLVEPKIKALFNGEIEVKPIHDEVLITLSNGEEKVRYSFKKSDFARPNELAGVSGKIEGKLYLPYESGTKVEAGESIVEIIKEGWNIPNRIPYAAILKVKDGAPVTQKIVSGAKGVVKYYKLKGDYLERFEGVKEGEKIEEKGLFAVIADEEGREAARHYIARGSIIEVADDQSVDKDTVIAMPAKSDKTVIAEWDPYSIPIIAEKEGVITFEDIIPGVTAVEQVDEFTGETRLTINEYIPAEYKPAIVLAPKDGSEIIRYVLDPKTAIYVQNGQEVKLAQTLAKTPKAAAKSKDITGGLPRVSELFEARRPKDPAVVAEIDGVVSFGKPSRGKQRIIITADTGQTVEYLIDKNRQILVHNGEFVHAGERLTDGTVSGHDILRTLGEKALMYYMVSEIQQVYRRQGVNISDKHIEIIVSQMLRQVKIVDSGDTKFIPGDLVSKKEFRKENEKILRLGGQPAIAEPILIGITRAAVSSDSVISAASFQDTTKVLTEASVSAKVDHLEDLKENVIIGRLIPVGTGLYKDRKVKVETASQE.

Zn(2+) is bound by residues cysteine 71, cysteine 73, cysteine 86, and cysteine 89. Aspartate 470, aspartate 472, and aspartate 474 together coordinate Mg(2+). 4 residues coordinate Zn(2+): cysteine 800, cysteine 874, cysteine 881, and cysteine 884.

It belongs to the RNA polymerase beta' chain family. In terms of assembly, the RNAP catalytic core consists of 2 alpha, 1 beta, 1 beta' and 1 omega subunit. When a sigma factor is associated with the core the holoenzyme is formed, which can initiate transcription. It depends on Mg(2+) as a cofactor. Requires Zn(2+) as cofactor.

The catalysed reaction is RNA(n) + a ribonucleoside 5'-triphosphate = RNA(n+1) + diphosphate. Functionally, DNA-dependent RNA polymerase catalyzes the transcription of DNA into RNA using the four ribonucleoside triphosphates as substrates. This chain is DNA-directed RNA polymerase subunit beta', found in Nitratiruptor sp. (strain SB155-2).